Consider the following 495-residue polypeptide: Averantin hydroxylase (495 aa).

A helical membrane pass occupies residues isoleucine 12–tryptophan 32. 2 N-linked (GlcNAc...) asparagine glycosylation sites follow: asparagine 258 and asparagine 289. Residue cysteine 436 coordinates heme.

Belongs to the cytochrome P450 family. Heme serves as cofactor.

The protein localises to the membrane. It carries out the reaction (1'S)-averantin + reduced [NADPH--hemoprotein reductase] + O2 = (1'S,5'R)-5'-hydroxyaverantin + oxidized [NADPH--hemoprotein reductase] + H2O. The catalysed reaction is (1'S)-averantin + reduced [NADPH--hemoprotein reductase] + O2 = (1'S,5'S)-5'-hydroxyaverantin + oxidized [NADPH--hemoprotein reductase] + H2O + H(+). It functions in the pathway mycotoxin biosynthesis; aflatoxin biosynthesis. Its function is as follows. Averantin hydroxylase; part of the gene cluster that mediates the biosynthesis of aflatoxins, a group of polyketide-derived furanocoumarins, and part of the most toxic and carcinogenic compounds among the known mycotoxins. The four major aflatoxins produced by A.parasiticus are aflatoxin B1 (AFB1), aflatoxin B2 (AFB2), aflatoxin G1 (AFG1) and aflatoxin G2 (AFG2). Within the aflatoxin pathway, the cytochrome P450 monooxygenase aflG catalyzes the hydroxylation of AVN to 5'hydroxyaverantin (HAVN). The biosynthesis of aflatoxins begins with the norsolorinic acid synthase aflC that combines a hexanoyl starter unit produced by the fatty acid synthase aflA/aflB and 7 malonyl-CoA extender units to synthesize the precursor NOR. The second step is the conversion of NOR to averantin and requires the norsolorinic acid ketoreductase aflD, which catalyzes the dehydration of norsolorinic acid to form (1'S)-averantin. The norsolorinic acid reductases aflE and aflF may also play a role in the conversion of NOR to AVN. The cytochrome P450 monooxygenase aflG then catalyzes the hydroxylation of AVN to 5'hydroxyaverantin (HAVN). The next step is performed by the 5'-hydroxyaverantin dehydrogenase aflH that transforms HAVN to 5'-oxoaverantin (OAVN) which is further converted to averufin (AVF) by aflK that plays a dual role in the pathway, as a 5'-oxoaverantin cyclase that mediates conversion of 5'-oxoaverantin, as well as a versicolorin B synthase in a later step in the pathway. The averufin oxidase aflI catalyzes the conversion of AVF to versiconal hemiacetal acetate (VHA). VHA is then the substrate for the versiconal hemiacetal acetate esterase aflJ to yield versiconal (VAL). Versicolorin B synthase aflK then converts VAL to versicolorin B (VERB) by closing the bisfuran ring of aflatoxin which is required for DNA-binding, thus giving to aflatoxin its activity as a mutagen. Then, the activity of the versicolorin B desaturase aflL leads to versicolorin A (VERA). A branch point starts from VERB since it can also be converted to dihydrodemethylsterigmatocystin (DMDHST), probably also by aflL, VERA being a precursor for aflatoxins B1 and G1, and DMDHST for aflatoxins B2 and G2. Next, the versicolorin reductase aflM and the cytochrome P450 monooxygenase aflN are involved in conversion of VERA to demethylsterigmatocystin (DMST). AflX and aflY seem also involved in this step, through probable aflX-mediated epoxide ring-opening step following versicolorin A oxidation and aflY-mediated Baeyer-Villiger oxidation required for the formation of the xanthone ring. The methyltransferase aflO then leads to the modification of DMST to sterigmatocystin (ST), and of DMDHST to dihydrosterigmatocystin (DHST). Both ST and DHST are then substrates of the O-methyltransferase aflP to yield O-methylsterigmatocystin (OMST) and dihydro-O-methylsterigmatocystin (DHOMST), respectively. Finally OMST is converted to aflatoxins B1 and G1, and DHOMST to aflatoxins B2 and G2, via the action of several enzymes including O-methylsterigmatocystin oxidoreductase aflQ, the cytochrome P450 monooxygenase aflU, but also the NADH-dependent flavin oxidoreductase nadA which is specifically required for the synthesis of AFG1. The chain is Averantin hydroxylase from Aspergillus parasiticus (strain ATCC 56775 / NRRL 5862 / SRRC 143 / SU-1).